The sequence spans 275 residues: Large ribosomal subunit protein uL2 (275 aa).

2 disordered regions span residues 28-48 and 223-275; these read KPYA…NNGR and VVMN…RNKK.

Belongs to the universal ribosomal protein uL2 family. In terms of assembly, part of the 50S ribosomal subunit. Forms a bridge to the 30S subunit in the 70S ribosome.

In terms of biological role, one of the primary rRNA binding proteins. Required for association of the 30S and 50S subunits to form the 70S ribosome, for tRNA binding and peptide bond formation. It has been suggested to have peptidyltransferase activity; this is somewhat controversial. Makes several contacts with the 16S rRNA in the 70S ribosome. The polypeptide is Large ribosomal subunit protein uL2 (Photobacterium profundum (strain SS9)).